The primary structure comprises 352 residues: Septin-2B (352 aa).

The 273-residue stretch at 33 to 305 (KGFEFTLMVV…ENFRSERLKK (273 aa)) folds into the Septin-type G domain. A G1 motif region spans residues 43–50 (GESGLGKS). Residues 43–50 (GESGLGKS), Thr-77, Gly-103, 182–190 (KADTLTLRE), Gly-240, and Arg-255 contribute to the GTP site. The G3 motif stretch occupies residues 100 to 103 (DTPG). The G4 motif stretch occupies residues 181-184 (AKAD). The segment at 259-269 (WGVVEVENPEH) is important for dimerization.

It belongs to the TRAFAC class TrmE-Era-EngA-EngB-Septin-like GTPase superfamily. Septin GTPase family. Septins polymerize into heterooligomeric protein complexes that form filaments, and associate with cellular membranes, actin filaments and microtubules. GTPase activity is required for filament formation. Can form heterooligomers with other family members and form filaments. Interacts with wdpcp.

Its subcellular location is the cytoplasm. The protein resides in the cytoskeleton. It is found in the spindle. The protein localises to the cleavage furrow. It localises to the midbody. Its subcellular location is the cell projection. The protein resides in the cilium membrane. Filament-forming cytoskeletal GTPase. Required for normal organization of the actin cytoskeleton. Plays a role in the biogenesis of polarized columnar-shaped epithelium. Required for the progression through mitosis through regulation of chromosome congression. During anaphase, may be required for chromosome segregation and spindle elongation. Probably plays a role in ciliogenesis and collective cell movements including convergent extension during gastrulation. In cilia, required for the integrity of the diffusion barrier at the base of the primary cilium that prevents diffusion of transmembrane proteins between the cilia and plasma membranes. Controls cell shape and not polarization of cells during convergent extension. This chain is Septin-2B (sept2-b), found in Xenopus laevis (African clawed frog).